Here is a 134-residue protein sequence, read N- to C-terminus: Small ribosomal subunit protein uS8c (134 aa).

It belongs to the universal ribosomal protein uS8 family. As to quaternary structure, part of the 30S ribosomal subunit.

It localises to the plastid. The protein localises to the chloroplast. Functionally, one of the primary rRNA binding proteins, it binds directly to 16S rRNA central domain where it helps coordinate assembly of the platform of the 30S subunit. The protein is Small ribosomal subunit protein uS8c (rps8) of Eucalyptus globulus subsp. globulus (Tasmanian blue gum).